Consider the following 247-residue polypeptide: Protein LIFEGUARD 4 (247 aa).

The next 7 helical transmembrane spans lie at 42–62 (VYSI…TVVF), 75–95 (AGLA…CPLY), 105–125 (YLLL…TCAF), 130–150 (VILE…VYTF), 165–185 (FLFG…FFPL), 188–208 (ISVM…IVYD), and 222–242 (IWAA…LLTI).

Belongs to the BI1 family.

Its subcellular location is the membrane. The sequence is that of Protein LIFEGUARD 4 from Arabidopsis thaliana (Mouse-ear cress).